The chain runs to 56 residues: HLRNHFGSKPFKCDKCSYSCVNKSMLNSHLKSHSNVYQFRCSDCAYATKYCHSLKL.

3 C2H2-type zinc fingers span residues 1 to 5, 11 to 33, and 39 to 56; these read HLRNH, FKCD…LKSH, and FRCS…SLKL.

Belongs to the hunchback C2H2-type zinc-finger protein family.

It localises to the nucleus. Gap class segmentation protein that controls development of head structures. This is Protein hunchback (hb) from Euscelis plebejus (Leafhopper).